Consider the following 85-residue polypeptide: Translation initiation factor IF-1 (85 aa).

The S1-like domain maps to 1–72; sequence MAKEELIEMH…SKGRITFRHI (72 aa).

It belongs to the IF-1 family. As to quaternary structure, component of the 30S ribosomal translation pre-initiation complex which assembles on the 30S ribosome in the order IF-2 and IF-3, IF-1 and N-formylmethionyl-tRNA(fMet); mRNA recruitment can occur at any time during PIC assembly.

Its subcellular location is the cytoplasm. Functionally, one of the essential components for the initiation of protein synthesis. Stabilizes the binding of IF-2 and IF-3 on the 30S subunit to which N-formylmethionyl-tRNA(fMet) subsequently binds. Helps modulate mRNA selection, yielding the 30S pre-initiation complex (PIC). Upon addition of the 50S ribosomal subunit IF-1, IF-2 and IF-3 are released leaving the mature 70S translation initiation complex. This Polaromonas naphthalenivorans (strain CJ2) protein is Translation initiation factor IF-1.